We begin with the raw amino-acid sequence, 172 residues long: S-ribosylhomocysteine lyase (172 aa).

Fe cation is bound by residues H54, H58, and C128.

This sequence belongs to the LuxS family. As to quaternary structure, homodimer. Fe cation serves as cofactor.

The enzyme catalyses S-(5-deoxy-D-ribos-5-yl)-L-homocysteine = (S)-4,5-dihydroxypentane-2,3-dione + L-homocysteine. In terms of biological role, involved in the synthesis of autoinducer 2 (AI-2) which is secreted by bacteria and is used to communicate both the cell density and the metabolic potential of the environment. The regulation of gene expression in response to changes in cell density is called quorum sensing. Catalyzes the transformation of S-ribosylhomocysteine (RHC) to homocysteine (HC) and 4,5-dihydroxy-2,3-pentadione (DPD). The polypeptide is S-ribosylhomocysteine lyase (Aliivibrio salmonicida (strain LFI1238) (Vibrio salmonicida (strain LFI1238))).